The primary structure comprises 142 residues: Nucleoside diphosphate kinase (142 aa).

Positions 11, 59, 87, 93, 107, and 117 each coordinate ATP. His-120 (pros-phosphohistidine intermediate) is an active-site residue.

Belongs to the NDK family. As to quaternary structure, homotetramer. The cofactor is Mg(2+).

It localises to the cytoplasm. It carries out the reaction a 2'-deoxyribonucleoside 5'-diphosphate + ATP = a 2'-deoxyribonucleoside 5'-triphosphate + ADP. The catalysed reaction is a ribonucleoside 5'-diphosphate + ATP = a ribonucleoside 5'-triphosphate + ADP. Functionally, major role in the synthesis of nucleoside triphosphates other than ATP. The ATP gamma phosphate is transferred to the NDP beta phosphate via a ping-pong mechanism, using a phosphorylated active-site intermediate. The protein is Nucleoside diphosphate kinase of Aquifex aeolicus (strain VF5).